The sequence spans 261 residues: High-affinity zinc uptake system membrane protein ZnuB (261 aa).

7 helical membrane-spanning segments follow: residues 5–27 (FFFG…LFII), 48–70 (FAVL…FGML), 85–107 (ILGI…ISNF), 128–150 (IVIL…DLML), 172–194 (ILIF…LIAI), 215–234 (AFFS…LMSV), and 238–257 (LAIS…ISNL).

Belongs to the ABC-3 integral membrane protein family.

It localises to the cell membrane. Involved in the high-affinity zinc uptake transport system. In Buchnera aphidicola subsp. Baizongia pistaciae (strain Bp), this protein is High-affinity zinc uptake system membrane protein ZnuB (znuB).